Here is a 615-residue protein sequence, read N- to C-terminus: DNA mismatch repair protein MutL (615 aa).

The disordered stretch occupies residues 363 to 397; that stretch reads FAEPAAREPVAPRYTPAPASGSRPAAPWPNAQPGY. The segment covering 364 to 391 has biased composition (low complexity); the sequence is AEPAAREPVAPRYTPAPASGSRPAAPWP.

This sequence belongs to the DNA mismatch repair MutL/HexB family.

Functionally, this protein is involved in the repair of mismatches in DNA. It is required for dam-dependent methyl-directed DNA mismatch repair. May act as a 'molecular matchmaker', a protein that promotes the formation of a stable complex between two or more DNA-binding proteins in an ATP-dependent manner without itself being part of a final effector complex. The protein is DNA mismatch repair protein MutL of Escherichia coli (strain ATCC 8739 / DSM 1576 / NBRC 3972 / NCIMB 8545 / WDCM 00012 / Crooks).